We begin with the raw amino-acid sequence, 625 residues long: MSSQDQQQQQQPAQTQTSTSSSSNNENATTATSSIQQNVVADDSLLCQWEKCSERCPTPEALFDHICEKHVGRKSTNNLNLTCGWNSCRTTTVKRDHITSHIRVHVPLKPHKCEFCGKAFKRPQDLKKHVKTHADDSVLLRTPEQSGGSNGGYRQPGGKVIANLQHLAANPMGYYDHNASMHPGSAGVYGNSHHGGHSGYYAPAHSQQSSYGGGPGYYQMSHNPDLGQHAAWDEKKRNFDNLNDFFGAAKRRQIDAHSYQQVNQRLMQLQGIPIGTGGGISDYIHSAPQLVPIDGHGGHGHGGPMPQHQYSLPLPNLRTKSDLNSIDQFLEQMQSTVYESSNAAAAAGIHQPGAHYTHQALNFRQSHSPPQTHIHNIGSMAPHVSTSYASAPMTATHSSHSVSSGTPALTPPSSSVSYTSGNSPMSSSGMSPISRHSSTSNAAYPNLPAVTLGYSPHHSATAPTSTLGTNFDSDPRRRYSGGVLQRSAGGLNSSQYRESMETSTVGSPTPSPKETTPRPESIVKTEVTNNIDPALSDAGSPSVRSVDTLESARDRAEEAWIENIRVIEALRRYVSDRLQNGEYVKDEEDEDVSMADTDMQDTQVKTEEKPVESLYPVLKTDDDDE.

Residues Met1–Ser34 are compositionally biased toward low complexity. Positions Met1 to Ile35 are disordered. C2H2-type zinc fingers lie at residues Leu45–His70, Leu81–His105, and His111–His133. A compositionally biased stretch (polar residues) spans Ala391–Val416. The interval Ala391–Ser440 is disordered. The span at Ser417–Ser438 shows a compositional bias: low complexity. Positions Tyr444–Leu447 match the YPX[LI] motif 1 motif. Disordered stretches follow at residues Ser455 to Val543 and Val584 to Glu625. 2 stretches are compositionally biased toward polar residues: residues Thr461 to Asp472 and Gly490 to Glu514. Positions Tyr615 to Leu618 match the YPX[LI] motif 2 motif.

This sequence belongs to the pacC/RIM101 family. Activated by C-terminal proteolytic cleavage by signaling protease (probably palB/RIM13) at neutral to alkaline ambient pH.

It localises to the cytoplasm. The protein localises to the nucleus. Functionally, transcription factor that mediates regulation of both acid- and alkaline-expressed genes in response to ambient pH. At alkaline ambient pH, activates transcription of alkaline-expressed genes (including pac1 itself) and represses transcription of acid-expressed genes. In Sclerotinia sclerotiorum (White mold), this protein is pH-response transcription factor pacC/RIM101 (pac1).